The sequence spans 112 residues: Protein Churchill (112 aa).

Zn(2+)-binding residues include cysteine 2, cysteine 5, cysteine 30, cysteine 33, histidine 59, cysteine 61, cysteine 64, histidine 66, histidine 71, cysteine 88, and cysteine 91.

The protein belongs to the Churchill family.

Its function is as follows. Transcriptional activator that mediates FGF signaling during neural development. Plays a role in the regulation of cell movement. Does not bind DNA by itself. This Xenopus laevis (African clawed frog) protein is Protein Churchill (churc1).